The following is a 667-amino-acid chain: Fermitin family homolog 3 (667 aa).

S8 carries the phosphoserine modification. The residue at position 11 (Y11) is a Phosphotyrosine. The FERM domain maps to 229–558 (WLDSSRCLMQ…SLPDFGISYV (330 aa)). The PH domain maps to 354–457 (DHLRIFRIPR…WMAGCRLASK (104 aa)). Y504 carries the phosphotyrosine modification. Position 591 is a phosphothreonine (T591).

The protein belongs to the kindlin family. In terms of assembly, interacts with ITGB1, ITGB2 and ITGB3 (via cytoplasmic tails). Highly expressed in lymph node. Expressed in thymus, spleen and leukocytes. Weakly expressed in placenta, small intestine, stomach, testis and lung. Overexpressed in B-cell malignancies.

Its subcellular location is the cell projection. It localises to the podosome. Plays a central role in cell adhesion in hematopoietic cells. Acts by activating the integrin beta-1-3 (ITGB1, ITGB2 and ITGB3). Required for integrin-mediated platelet adhesion and leukocyte adhesion to endothelial cells. Required for activation of integrin beta-2 (ITGB2) in polymorphonuclear granulocytes (PMNs). Functionally, isoform 2 may act as a repressor of NF-kappa-B and apoptosis. The sequence is that of Fermitin family homolog 3 (FERMT3) from Homo sapiens (Human).